Here is a 358-residue protein sequence, read N- to C-terminus: Alternative oxidase, mitochondrial (358 aa).

A helical transmembrane segment spans residues 152–172 (LIRMVFLESVAGVPGMVAGML). 3 residues coordinate Fe cation: glutamate 159, glutamate 198, and histidine 201. A helical membrane pass occupies residues 217 to 237 (FMIIGAQGVFFNSMFLSYLIS). Positions 249, 250, 306, and 309 each coordinate Fe cation.

The protein belongs to the alternative oxidase family. It depends on Fe cation as a cofactor.

Its subcellular location is the mitochondrion inner membrane. Catalyzes cyanide-resistant oxygen consumption. May increase respiration when the cytochrome respiratory pathway is restricted, or in response to low temperatures. This chain is Alternative oxidase, mitochondrial, found in Blumeria graminis (Powdery mildew).